The chain runs to 216 residues: Cytochrome c biogenesis ATP-binding export protein CcmA (216 aa).

Positions 2–215 (LSVEELSCVR…SNHLRKIKLG (214 aa)) constitute an ABC transporter domain. Residue 34–41 (GHNGAGKT) coordinates ATP.

The protein belongs to the ABC transporter superfamily. CcmA exporter (TC 3.A.1.107) family. The complex is composed of two ATP-binding proteins (CcmA) and two transmembrane proteins (CcmB).

The protein resides in the cell inner membrane. It catalyses the reaction heme b(in) + ATP + H2O = heme b(out) + ADP + phosphate + H(+). Functionally, part of the ABC transporter complex CcmAB involved in the biogenesis of c-type cytochromes; once thought to export heme, this seems not to be the case, but its exact role is uncertain. Responsible for energy coupling to the transport system. The protein is Cytochrome c biogenesis ATP-binding export protein CcmA of Photobacterium profundum (strain SS9).